Consider the following 517-residue polypeptide: Amidophosphoribosyltransferase (517 aa).

The residue at position 1 (Met1) is an N-acetylmethionine. Residues Met1–Glu11 constitute a propeptide that is removed on maturation. Catalysis depends on Cys12, which acts as the Nucleophile. Residues Cys12–His261 enclose the Glutamine amidotransferase type-2 domain. Cys280 contacts [4Fe-4S] cluster. Ser327, Asp389, and Asp390 together coordinate Mg(2+). [4Fe-4S] cluster is bound by residues Cys426, Cys503, and Cys506.

The protein in the C-terminal section; belongs to the purine/pyrimidine phosphoribosyltransferase family. Homotetramer. It depends on Mg(2+) as a cofactor. [4Fe-4S] cluster is required as a cofactor.

The catalysed reaction is 5-phospho-beta-D-ribosylamine + L-glutamate + diphosphate = 5-phospho-alpha-D-ribose 1-diphosphate + L-glutamine + H2O. It participates in purine metabolism; IMP biosynthesis via de novo pathway; N(1)-(5-phospho-D-ribosyl)glycinamide from 5-phospho-alpha-D-ribose 1-diphosphate: step 1/2. Functionally, catalyzes the formation of phosphoribosylamine from phosphoribosylpyrophosphate (PRPP) and glutamine. This Mus musculus (Mouse) protein is Amidophosphoribosyltransferase.